The chain runs to 184 residues: ATP synthase subunit b, chloroplastic (184 aa).

Residues 27-49 (LATNPINLSVVLGVLIFFGKGVL) traverse the membrane as a helical segment.

This sequence belongs to the ATPase B chain family. As to quaternary structure, F-type ATPases have 2 components, F(1) - the catalytic core - and F(0) - the membrane proton channel. F(1) has five subunits: alpha(3), beta(3), gamma(1), delta(1), epsilon(1). F(0) has four main subunits: a(1), b(1), b'(1) and c(10-14). The alpha and beta chains form an alternating ring which encloses part of the gamma chain. F(1) is attached to F(0) by a central stalk formed by the gamma and epsilon chains, while a peripheral stalk is formed by the delta, b and b' chains.

It localises to the plastid. The protein resides in the chloroplast thylakoid membrane. In terms of biological role, f(1)F(0) ATP synthase produces ATP from ADP in the presence of a proton or sodium gradient. F-type ATPases consist of two structural domains, F(1) containing the extramembraneous catalytic core and F(0) containing the membrane proton channel, linked together by a central stalk and a peripheral stalk. During catalysis, ATP synthesis in the catalytic domain of F(1) is coupled via a rotary mechanism of the central stalk subunits to proton translocation. Functionally, component of the F(0) channel, it forms part of the peripheral stalk, linking F(1) to F(0). The protein is ATP synthase subunit b, chloroplastic of Buxus microphylla (Littleleaf boxwood).